The following is a 750-amino-acid chain: Photosystem I P700 chlorophyll a apoprotein A1 (750 aa).

Transmembrane regions (helical) follow at residues 70–93 (VFSA…FHGA), 156–179 (LYCT…FHYH), 195–219 (LNHH…HVSL), 291–309 (TAHH…GHMY), 346–369 (WHAQ…HHMY), 385–411 (LSLF…IFMV), 433–455 (AIIS…LYIH), and 531–549 (FLVH…LILL). [4Fe-4S] cluster-binding residues include Cys573 and Cys582. A run of 2 helical transmembrane segments spans residues 589-610 (HVFL…HFSW) and 664-686 (LSAY…MFLF). His675 is a chlorophyll a' binding site. Residues Met683 and Tyr691 each coordinate chlorophyll a. Position 692 (Trp692) interacts with phylloquinone. Residues 724 to 744 (AVGVAHYLLGGIATTWAFFLA) form a helical membrane-spanning segment.

This sequence belongs to the PsaA/PsaB family. As to quaternary structure, the PsaA/B heterodimer binds the P700 chlorophyll special pair and subsequent electron acceptors. PSI consists of a core antenna complex that captures photons, and an electron transfer chain that converts photonic excitation into a charge separation. The eukaryotic PSI reaction center is composed of at least 11 subunits. It depends on P700 is a chlorophyll a/chlorophyll a' dimer, A0 is one or more chlorophyll a, A1 is one or both phylloquinones and FX is a shared 4Fe-4S iron-sulfur center. as a cofactor.

It is found in the plastid. It localises to the chloroplast thylakoid membrane. The enzyme catalyses reduced [plastocyanin] + hnu + oxidized [2Fe-2S]-[ferredoxin] = oxidized [plastocyanin] + reduced [2Fe-2S]-[ferredoxin]. In terms of biological role, psaA and PsaB bind P700, the primary electron donor of photosystem I (PSI), as well as the electron acceptors A0, A1 and FX. PSI is a plastocyanin-ferredoxin oxidoreductase, converting photonic excitation into a charge separation, which transfers an electron from the donor P700 chlorophyll pair to the spectroscopically characterized acceptors A0, A1, FX, FA and FB in turn. Oxidized P700 is reduced on the lumenal side of the thylakoid membrane by plastocyanin. This chain is Photosystem I P700 chlorophyll a apoprotein A1, found in Angiopteris evecta (Mule's foot fern).